We begin with the raw amino-acid sequence, 157 residues long: SsrA-binding protein (157 aa).

The tract at residues 132–157 (KLHDKRETEKKRDWSREKGRLLRSRG) is disordered. Basic and acidic residues predominate over residues 135-151 (DKRETEKKRDWSREKGR).

The protein belongs to the SmpB family.

It is found in the cytoplasm. In terms of biological role, required for rescue of stalled ribosomes mediated by trans-translation. Binds to transfer-messenger RNA (tmRNA), required for stable association of tmRNA with ribosomes. tmRNA and SmpB together mimic tRNA shape, replacing the anticodon stem-loop with SmpB. tmRNA is encoded by the ssrA gene; the 2 termini fold to resemble tRNA(Ala) and it encodes a 'tag peptide', a short internal open reading frame. During trans-translation Ala-aminoacylated tmRNA acts like a tRNA, entering the A-site of stalled ribosomes, displacing the stalled mRNA. The ribosome then switches to translate the ORF on the tmRNA; the nascent peptide is terminated with the 'tag peptide' encoded by the tmRNA and targeted for degradation. The ribosome is freed to recommence translation, which seems to be the essential function of trans-translation. This Rhodopseudomonas palustris (strain ATCC BAA-98 / CGA009) protein is SsrA-binding protein.